A 161-amino-acid chain; its full sequence is UPF0178 protein BSUIS_A1819 (161 aa).

It belongs to the UPF0178 family.

This is UPF0178 protein BSUIS_A1819 from Brucella suis (strain ATCC 23445 / NCTC 10510).